The primary structure comprises 224 residues: Ribonuclease T (224 aa).

Positions 20–195 constitute an Exonuclease domain; that stretch reads VVIDVETAGF…YDTQKTAELF (176 aa). 4 residues coordinate Mg(2+): aspartate 23, glutamate 25, histidine 182, and aspartate 187. Histidine 182 acts as the Proton donor/acceptor in catalysis.

The protein belongs to the RNase T family. In terms of assembly, homodimer. Mg(2+) is required as a cofactor.

Functionally, trims short 3' overhangs of a variety of RNA species, leaving a one or two nucleotide 3' overhang. Responsible for the end-turnover of tRNA: specifically removes the terminal AMP residue from uncharged tRNA (tRNA-C-C-A). Also appears to be involved in tRNA biosynthesis. In Vibrio cholerae serotype O1 (strain ATCC 39315 / El Tor Inaba N16961), this protein is Ribonuclease T.